A 261-amino-acid polypeptide reads, in one-letter code: N-acetyltransferase ECO1 (261 aa).

The CCHH-type zinc-finger motif lies at Leu29–His53. An N-acetyltransferase domain is found at Val102–Leu261.

It belongs to the acetyltransferase family. ECO subfamily.

Its subcellular location is the nucleus. Functionally, probable acetyltransferase required for the establishment of sister chromatid cohesion and couple the processes of cohesion and DNA replication to ensure that only sister chromatids become paired together. In contrast to the structural cohesins, the deposition and establishment factors are required only during S phase. Acts by acetylating the cohesin complex component SMC3. The chain is N-acetyltransferase ECO1 (ECO1) from Candida glabrata (strain ATCC 2001 / BCRC 20586 / JCM 3761 / NBRC 0622 / NRRL Y-65 / CBS 138) (Yeast).